We begin with the raw amino-acid sequence, 477 residues long: Glycogen synthase (477 aa).

Lys15 lines the ADP-alpha-D-glucose pocket.

Belongs to the glycosyltransferase 1 family. Bacterial/plant glycogen synthase subfamily.

The enzyme catalyses [(1-&gt;4)-alpha-D-glucosyl](n) + ADP-alpha-D-glucose = [(1-&gt;4)-alpha-D-glucosyl](n+1) + ADP + H(+). It participates in glycan biosynthesis; glycogen biosynthesis. Its function is as follows. Synthesizes alpha-1,4-glucan chains using ADP-glucose. The polypeptide is Glycogen synthase (Shigella boydii serotype 4 (strain Sb227)).